The sequence spans 88 residues: Sec-independent protein translocase protein TatA (88 aa).

A helical membrane pass occupies residues methionine 1–glycine 21. The span at methionine 43 to alanine 52 shows a compositional bias: basic and acidic residues. Positions methionine 43 to alanine 88 are disordered. A compositionally biased stretch (polar residues) spans isoleucine 57–arginine 71.

The protein belongs to the TatA/E family. As to quaternary structure, the Tat system comprises two distinct complexes: a TatABC complex, containing multiple copies of TatA, TatB and TatC subunits, and a separate TatA complex, containing only TatA subunits. Substrates initially bind to the TatABC complex, which probably triggers association of the separate TatA complex to form the active translocon.

It localises to the cell membrane. Its function is as follows. Part of the twin-arginine translocation (Tat) system that transports large folded proteins containing a characteristic twin-arginine motif in their signal peptide across membranes. TatA could form the protein-conducting channel of the Tat system. The sequence is that of Sec-independent protein translocase protein TatA from Mycobacterium marinum (strain ATCC BAA-535 / M).